Consider the following 546-residue polypeptide: Mitochondrial distribution and morphology protein 34 (546 aa).

One can recognise an SMP-LTD domain in the interval 1-195 (MAFNFNWSPL…LPAIIHRLSL (195 aa)). Disordered regions lie at residues 208–230 (EVKADEEAGPGQDPLLSPPQDPV), 299–319 (SHGGLISPASPPLSRTHSHVA), 344–382 (TMGAGRHPRTRPSRKHKRRVVDLRKPQKLDDTSSTCTDS), 395–416 (SSSARVGEKPDDPITPPVSPDA), and 517–546 (RRIQEGKGPGSVGSNYCGRRDPSPPPAYGQ). Residues 349–362 (RHPRTRPSRKHKRR) are compositionally biased toward basic residues. The span at 363-374 (VVDLRKPQKLDD) shows a compositional bias: basic and acidic residues.

Belongs to the MDM34 family. Component of the ER-mitochondria encounter structure (ERMES) or MDM complex, composed of MMM1, MDM10, MDM12 and MDM34.

It is found in the mitochondrion outer membrane. Component of the ERMES/MDM complex, which serves as a molecular tether to connect the endoplasmic reticulum (ER) and mitochondria. Components of this complex are involved in the control of mitochondrial shape and protein biogenesis, and function in nonvesicular lipid trafficking between the ER and mitochondria. MDM34 is required for the interaction of the ER-resident membrane protein MMM1 and the outer mitochondrial membrane-resident beta-barrel protein MDM10. The sequence is that of Mitochondrial distribution and morphology protein 34 from Arthroderma otae (strain ATCC MYA-4605 / CBS 113480) (Microsporum canis).